A 102-amino-acid polypeptide reads, in one-letter code: Phosphoribosyl-ATP pyrophosphatase (102 aa).

It belongs to the PRA-PH family.

Its subcellular location is the cytoplasm. The enzyme catalyses 1-(5-phospho-beta-D-ribosyl)-ATP + H2O = 1-(5-phospho-beta-D-ribosyl)-5'-AMP + diphosphate + H(+). Its pathway is amino-acid biosynthesis; L-histidine biosynthesis; L-histidine from 5-phospho-alpha-D-ribose 1-diphosphate: step 2/9. This Jannaschia sp. (strain CCS1) protein is Phosphoribosyl-ATP pyrophosphatase.